Reading from the N-terminus, the 473-residue chain is Maltose fermentation regulatory protein MAL13 (473 aa).

The segment at residues 13–39 is a DNA-binding region (zn(2)-C6 fungal-type); it reads CDCCRIRRVKCDGKRPCSSCLQNSLDC. The short motif at 46-54 is the Nuclear localization signal element; it reads RKRGPKSIR.

The protein belongs to the MAL13 family.

Its subcellular location is the nucleus. In terms of biological role, regulates the coordinate transcription of structural MAL1S (maltase) and AGT1 (maltose permease) genes. This chain is Maltose fermentation regulatory protein MAL13 (MAL13), found in Saccharomyces cerevisiae (strain ATCC 204508 / S288c) (Baker's yeast).